We begin with the raw amino-acid sequence, 476 residues long: WD repeat, SAM and U-box domain-containing protein 1 (476 aa).

WD repeat units follow at residues 10-47 (DHSD…ELPY), 52-91 (GHTY…MLAV), 95-134 (PTGS…FYRS), 137-176 (VKDG…LCNE), 178-227 (AHDL…FLGG), 237-276 (GHSA…ILHT), and 279-318 (QHTR…PCAG). Residues 333-396 (WSEDDVSAWL…LQKIEELRMK (64 aa)) enclose the SAM domain. The 74-residue stretch at 403–476 (AVPDEFLCPI…ISRWLETQQK (74 aa)) folds into the U-box domain.

The polypeptide is WD repeat, SAM and U-box domain-containing protein 1 (WDSUB1) (Gallus gallus (Chicken)).